Here is a 136-residue protein sequence, read N- to C-terminus: Small ribosomal subunit protein uS8c (136 aa).

It belongs to the universal ribosomal protein uS8 family. In terms of assembly, part of the 30S ribosomal subunit.

Its subcellular location is the plastid. It is found in the chloroplast. One of the primary rRNA binding proteins, it binds directly to 16S rRNA central domain where it helps coordinate assembly of the platform of the 30S subunit. This Saccharum hybrid (Sugarcane) protein is Small ribosomal subunit protein uS8c (rps8).